Reading from the N-terminus, the 345-residue chain is Anthranilate phosphoribosyltransferase (345 aa).

5-phospho-alpha-D-ribose 1-diphosphate contacts are provided by residues G80, 83-84 (GD), T88, 90-93 (NIST), 108-116 (KHGNRSVSS), and S120. G80 contacts anthranilate. A Mg(2+)-binding site is contributed by S92. Anthranilate is bound at residue N111. R166 lines the anthranilate pocket. Mg(2+) contacts are provided by D225 and E226.

Belongs to the anthranilate phosphoribosyltransferase family. As to quaternary structure, homodimer. It depends on Mg(2+) as a cofactor.

The enzyme catalyses N-(5-phospho-beta-D-ribosyl)anthranilate + diphosphate = 5-phospho-alpha-D-ribose 1-diphosphate + anthranilate. The protein operates within amino-acid biosynthesis; L-tryptophan biosynthesis; L-tryptophan from chorismate: step 2/5. Functionally, catalyzes the transfer of the phosphoribosyl group of 5-phosphorylribose-1-pyrophosphate (PRPP) to anthranilate to yield N-(5'-phosphoribosyl)-anthranilate (PRA). The sequence is that of Anthranilate phosphoribosyltransferase from Desulforamulus reducens (strain ATCC BAA-1160 / DSM 100696 / MI-1) (Desulfotomaculum reducens).